A 327-amino-acid polypeptide reads, in one-letter code: MGNVFDYEDIQLIPAKCIVNSRSECDTTVTLGKHKFKLPVVPANMQTIIDERIATYLAENNYFYIMHRFQPEKRISFIRDMQSRGLIASISVGVKEDEYEFVQQLAAEHLTPEYITIDIAHGHSNAVINMIQHIKKHLPESFVIAGNVGTPEAVRELENAGADATKVGIGPGKVCITKIKTGFGTGGWQLAALRWCAKAASKPIIADGGIRTNGDVAKSIRFGATMVMIGSLFAGHEESPGETIEKDGKLYKEYFGSASEFQKGEKKNVEGKKMFVEHKGSLEDTLIEMEQDLQSSISYAGGTKLDSIRTVDYVVVKNSIFNGDKVY.

Residue cysteine 175 is the Thioimidate intermediate of the active site. Residue 204–227 participates in NADP(+) binding; that stretch reads IIADGGIRTNGDVAKSIRFGATMV.

Belongs to the IMPDH/GMPR family. GuaC type 2 subfamily.

It carries out the reaction IMP + NH4(+) + NADP(+) = GMP + NADPH + 2 H(+). Its function is as follows. Catalyzes the irreversible NADPH-dependent deamination of GMP to IMP. It functions in the conversion of nucleobase, nucleoside and nucleotide derivatives of G to A nucleotides, and in maintaining the intracellular balance of A and G nucleotides. This chain is GMP reductase, found in Bacillus anthracis.